We begin with the raw amino-acid sequence, 118 residues long: DNA-binding protein M164_1799 (118 aa).

Belongs to the PDCD5 family.

In Saccharolobus islandicus (strain M.16.4 / Kamchatka #3) (Sulfolobus islandicus), this protein is DNA-binding protein M164_1799.